The sequence spans 286 residues: Putative inorganic pyrophosphatase C3A12.02 (286 aa).

Diphosphate is bound at residue Arg85. Residues Asp122, Asp127, and Asp159 each contribute to the Mg(2+) site.

The protein belongs to the PPase family. Mg(2+) serves as cofactor.

The protein localises to the cytoplasm. The catalysed reaction is diphosphate + H2O = 2 phosphate + H(+). The chain is Putative inorganic pyrophosphatase C3A12.02 from Schizosaccharomyces pombe (strain 972 / ATCC 24843) (Fission yeast).